A 965-amino-acid polypeptide reads, in one-letter code: FKBP12-associated protein 1 (965 aa).

Residues Cys68–Tyr118 form an RING-type; degenerate zinc finger. 5 NF-X1-type zinc fingers span residues Cys159–Arg177, Cys216–Glu235, Cys362–Gln382, Cys468–Glu487, and Cys586–Gln606. One can recognise an R3H domain in the interval Glu733–Asp796. Residue Thr951 is modified to Phosphothreonine. The residue at position 958 (Ser958) is a Phosphoserine.

It belongs to the NFX1 family. Interacts with FPR1.

Its subcellular location is the cytoplasm. It is found in the nucleus. May play a role in transcription regulation. The polypeptide is FKBP12-associated protein 1 (FAP1) (Saccharomyces cerevisiae (strain ATCC 204508 / S288c) (Baker's yeast)).